A 75-amino-acid chain; its full sequence is CDC42 small effector protein 2-C (75 aa).

S-palmitoyl cysteine attachment occurs at residues cysteine 10 and cysteine 11. Residues 29-42 (IGEPMNFVHTAHVG) enclose the CRIB domain.

This sequence belongs to the CDC42SE/SPEC family.

Its subcellular location is the cytoplasm. The protein localises to the cytoskeleton. It is found in the cell membrane. In terms of biological role, probably involved in the organization of the actin cytoskeleton by acting downstream of CDC42, inducing actin filament assembly. This Xenopus laevis (African clawed frog) protein is CDC42 small effector protein 2-C (cdc42se2-c).